Reading from the N-terminus, the 634-residue chain is 1-phosphatidylinositol 4,5-bisphosphate phosphodiesterase zeta-1 (634 aa).

Residues 35–70 enclose the EF-hand domain; it reads CNTIHVKYIFKDNDRLKQGRITIEEFRTIYRIITYR. Positions 155–299 constitute a PI-PLC X-box domain; that stretch reads QDMTHPLTDY…LKFKILVRNK (145 aa). Catalysis depends on residues His170 and His215. Positions 312-345 are disordered; that stretch reads GSDMHGKVEEFEEEEEIEQEEDGSGAKEPEPVGD. The span at 321–334 shows a compositional bias: acidic residues; the sequence is EFEEEEEIEQEEDG. In terms of domain architecture, PI-PLC Y-box spans 376 to 492; sequence LSDLVIYTKV…GYVLKPRFLR (117 aa). The 124-residue stretch at 492–615 folds into the C2 domain; the sequence is RDKKTKFNPH…RGYRRVPLFS (124 aa).

Interacts (via its C2 domain) with PtdIns(3)P and, to a lesser extent, PtdIns(5)P in vitro. Ca(2+) serves as cofactor.

Its subcellular location is the nucleus. It is found in the cytoplasm. The protein localises to the perinuclear region. It catalyses the reaction a 1,2-diacyl-sn-glycero-3-phospho-(1D-myo-inositol-4,5-bisphosphate) + H2O = 1D-myo-inositol 1,4,5-trisphosphate + a 1,2-diacyl-sn-glycerol + H(+). Its function is as follows. The production of the second messenger molecules diacylglycerol (DAG) and inositol 1,4,5-trisphosphate (IP3) is mediated by activated phosphatidylinositol-specific phospholipase C enzymes. In vitro, hydrolyzes PtdIns(4,5)P2 in a Ca(2+)-dependent manner. Triggers intracellular Ca(2+) oscillations in oocytes solely during M phase and is involved in inducing oocyte activation and initiating embryonic development up to the blastocyst stage. Is therefore a strong candidate for the egg-activating soluble sperm factor that is transferred from the sperm into the egg cytoplasm following gamete membrane fusion. May exert an inhibitory effect on phospholipase-C-coupled processes that depend on calcium ions and protein kinase C, including CFTR trafficking and function. The sequence is that of 1-phosphatidylinositol 4,5-bisphosphate phosphodiesterase zeta-1 from Bos taurus (Bovine).